Consider the following 260-residue polypeptide: Proliferating cell nuclear antigen (260 aa).

Residues 61–80 mediate DNA binding; the sequence is RCDRNLAMGVNLSSMSKILK. K164 is covalently cross-linked (Glycyl lysine isopeptide (Lys-Gly) (interchain with G-Cter in ubiquitin)). Phosphoserine occurs at positions 259 and 260.

This sequence belongs to the PCNA family. As to quaternary structure, homotrimer. Forms a complex with activator 1 heteropentamer in the presence of ATP. Component of the replisome complex. Post-translationally, monoubiquitinated by the ube2b-rad18 complex on Lys-164. Monoubiquitination at Lys-164 also takes place in undamaged proliferating cells, and is mediated by the dcx(dtl) complex, leading to enhance PCNA-dependent translesion DNA synthesis.

It localises to the nucleus. Its function is as follows. This protein is an auxiliary protein of DNA polymerase delta and is involved in the control of eukaryotic DNA replication by increasing the polymerase's processibility during elongation of the leading strand. This chain is Proliferating cell nuclear antigen (pcna), found in Danio rerio (Zebrafish).